Here is a 225-residue protein sequence, read N- to C-terminus: uncharacterized protein (225 aa).

The span at 1–19 shows a compositional bias: polar residues; it reads MKFNSISPNKQHHTGFTTS. The interval 1–21 is disordered; the sequence is MKFNSISPNKQHHTGFTTSNN.

This is an uncharacterized protein from Dictyostelium discoideum (Social amoeba).